Consider the following 340-residue polypeptide: Putative cystathionine beta-lyase (340 aa).

Lys208 carries the N6-(pyridoxal phosphate)lysine modification.

The protein belongs to the trans-sulfuration enzymes family. Pyridoxal 5'-phosphate serves as cofactor.

It catalyses the reaction L,L-cystathionine + H2O = L-homocysteine + pyruvate + NH4(+). The enzyme catalyses an S-substituted L-cysteine + H2O = a thiol + pyruvate + NH4(+). Its pathway is amino-acid biosynthesis; L-methionine biosynthesis via de novo pathway; L-homocysteine from L-cystathionine: step 1/1. The sequence is that of Putative cystathionine beta-lyase (IRC7) from Saccharomyces cerevisiae (strain ATCC 204508 / S288c) (Baker's yeast).